Here is a 54-residue protein sequence, read N- to C-terminus: Large ribosomal subunit protein bL33B (54 aa).

The protein belongs to the bacterial ribosomal protein bL33 family.

The sequence is that of Large ribosomal subunit protein bL33B (rpmG2) from Streptomyces coelicolor (strain ATCC BAA-471 / A3(2) / M145).